Consider the following 78-residue polypeptide: NAD(P)H-quinone oxidoreductase subunit O (78 aa).

The protein belongs to the complex I NdhO subunit family. NDH-1 can be composed of about 15 different subunits; different subcomplexes with different compositions have been identified which probably have different functions.

The protein localises to the cellular thylakoid membrane. The enzyme catalyses a plastoquinone + NADH + (n+1) H(+)(in) = a plastoquinol + NAD(+) + n H(+)(out). It carries out the reaction a plastoquinone + NADPH + (n+1) H(+)(in) = a plastoquinol + NADP(+) + n H(+)(out). In terms of biological role, NDH-1 shuttles electrons from an unknown electron donor, via FMN and iron-sulfur (Fe-S) centers, to quinones in the respiratory and/or the photosynthetic chain. The immediate electron acceptor for the enzyme in this species is believed to be plastoquinone. Couples the redox reaction to proton translocation, and thus conserves the redox energy in a proton gradient. Cyanobacterial NDH-1 also plays a role in inorganic carbon-concentration. The polypeptide is NAD(P)H-quinone oxidoreductase subunit O (Prochlorococcus marinus (strain MIT 9301)).